The following is a 327-amino-acid chain: Aspartate--ammonia ligase (327 aa).

This sequence belongs to the class-II aminoacyl-tRNA synthetase family. AsnA subfamily.

Its subcellular location is the cytoplasm. The enzyme catalyses L-aspartate + NH4(+) + ATP = L-asparagine + AMP + diphosphate + H(+). Its pathway is amino-acid biosynthesis; L-asparagine biosynthesis; L-asparagine from L-aspartate (ammonia route): step 1/1. This Bacillus anthracis (strain A0248) protein is Aspartate--ammonia ligase.